We begin with the raw amino-acid sequence, 168 residues long: Photosystem I assembly protein Ycf3 (168 aa).

TPR repeat units follow at residues 35–68 (AFTYYRDGMSAQSEGNYAEALQNYYEAMRLEIDP), 72–105 (SYILYNIGLIHTSNGEHTKALEYYFRALERNPFL), and 120–153 (GEQAIQQGDSEIAEAWFDQAAEYWKQAIALTPGN).

The protein belongs to the Ycf3 family.

The protein resides in the plastid. The protein localises to the chloroplast thylakoid membrane. Essential for the assembly of the photosystem I (PSI) complex. May act as a chaperone-like factor to guide the assembly of the PSI subunits. The polypeptide is Photosystem I assembly protein Ycf3 (Solanum lycopersicum (Tomato)).